The primary structure comprises 213 residues: Uracil phosphoribosyltransferase (213 aa).

Residues R78, R103, and 130-138 (DPMLATGGS) contribute to the 5-phospho-alpha-D-ribose 1-diphosphate site. Uracil-binding positions include I193 and 198–200 (GDA). Position 199 (D199) interacts with 5-phospho-alpha-D-ribose 1-diphosphate.

Belongs to the UPRTase family. Mg(2+) is required as a cofactor.

The enzyme catalyses UMP + diphosphate = 5-phospho-alpha-D-ribose 1-diphosphate + uracil. The protein operates within pyrimidine metabolism; UMP biosynthesis via salvage pathway; UMP from uracil: step 1/1. Its activity is regulated as follows. Allosterically activated by GTP. Its function is as follows. Catalyzes the conversion of uracil and 5-phospho-alpha-D-ribose 1-diphosphate (PRPP) to UMP and diphosphate. This is Uracil phosphoribosyltransferase from Bordetella bronchiseptica (strain ATCC BAA-588 / NCTC 13252 / RB50) (Alcaligenes bronchisepticus).